A 104-amino-acid chain; its full sequence is Large ribosomal subunit protein uL24 (104 aa).

This sequence belongs to the universal ribosomal protein uL24 family. Part of the 50S ribosomal subunit.

In terms of biological role, one of two assembly initiator proteins, it binds directly to the 5'-end of the 23S rRNA, where it nucleates assembly of the 50S subunit. Functionally, one of the proteins that surrounds the polypeptide exit tunnel on the outside of the subunit. This Treponema denticola (strain ATCC 35405 / DSM 14222 / CIP 103919 / JCM 8153 / KCTC 15104) protein is Large ribosomal subunit protein uL24.